The primary structure comprises 236 residues: tRNA (guanine-N(7)-)-methyltransferase (236 aa).

Residues D35, E60, N87, and D113 each contribute to the S-adenosyl-L-methionine site. Residue D113 is part of the active site. Residues K117 and D149 each contribute to the substrate site. The tract at residues 217-236 is disordered; it reads EFEQHWQEIDNPGNAPTPDA.

Belongs to the class I-like SAM-binding methyltransferase superfamily. TrmB family.

It catalyses the reaction guanosine(46) in tRNA + S-adenosyl-L-methionine = N(7)-methylguanosine(46) in tRNA + S-adenosyl-L-homocysteine. It functions in the pathway tRNA modification; N(7)-methylguanine-tRNA biosynthesis. Functionally, catalyzes the formation of N(7)-methylguanine at position 46 (m7G46) in tRNA. This is tRNA (guanine-N(7)-)-methyltransferase from Synechococcus sp. (strain CC9902).